A 99-amino-acid chain; its full sequence is NADH-quinone oxidoreductase subunit K (99 aa).

The next 3 membrane-spanning stretches (helical) occupy residues 3–23 (PTYYLLLSALLFSIGAVGVLV), 28–48 (IVVFMCVELMLNAVNLTLVTF), and 59–79 (VMAFFVMVVAAAEVVVGLAII).

It belongs to the complex I subunit 4L family. As to quaternary structure, NDH-1 is composed of 14 different subunits. Subunits NuoA, H, J, K, L, M, N constitute the membrane sector of the complex.

The protein resides in the cell membrane. The enzyme catalyses a quinone + NADH + 5 H(+)(in) = a quinol + NAD(+) + 4 H(+)(out). Its function is as follows. NDH-1 shuttles electrons from NADH, via FMN and iron-sulfur (Fe-S) centers, to quinones in the respiratory chain. The immediate electron acceptor for the enzyme in this species is believed to be a menaquinone. Couples the redox reaction to proton translocation (for every two electrons transferred, four hydrogen ions are translocated across the cytoplasmic membrane), and thus conserves the redox energy in a proton gradient. This is NADH-quinone oxidoreductase subunit K from Saccharopolyspora erythraea (strain ATCC 11635 / DSM 40517 / JCM 4748 / NBRC 13426 / NCIMB 8594 / NRRL 2338).